The following is a 338-amino-acid chain: D-alanine--D-alanine ligase (338 aa).

The region spanning 120–324 (KRVMLAEGLP…YEDLCIEVLK (205 aa)) is the ATP-grasp domain. 150–205 (PDKLGLPLIVKPAREGSSIGLTKVTERAGMADAVAQAEKLDADILCEQFISGDEVT) provides a ligand contact to ATP. Mg(2+)-binding residues include aspartate 277, glutamate 291, and asparagine 293.

Belongs to the D-alanine--D-alanine ligase family. Mg(2+) serves as cofactor. It depends on Mn(2+) as a cofactor.

The protein resides in the cytoplasm. The enzyme catalyses 2 D-alanine + ATP = D-alanyl-D-alanine + ADP + phosphate + H(+). It participates in cell wall biogenesis; peptidoglycan biosynthesis. Cell wall formation. This chain is D-alanine--D-alanine ligase, found in Polaromonas sp. (strain JS666 / ATCC BAA-500).